The following is a 546-amino-acid chain: Chaperonin GroEL (546 aa).

Residues 29–32, lysine 50, 86–90, glycine 414, and aspartate 492 contribute to the ATP site; these read TMGP and DGTTT.

It belongs to the chaperonin (HSP60) family. Forms a cylinder of 14 subunits composed of two heptameric rings stacked back-to-back. Interacts with the co-chaperonin GroES.

The protein resides in the cytoplasm. It carries out the reaction ATP + H2O + a folded polypeptide = ADP + phosphate + an unfolded polypeptide.. Functionally, together with its co-chaperonin GroES, plays an essential role in assisting protein folding. The GroEL-GroES system forms a nano-cage that allows encapsulation of the non-native substrate proteins and provides a physical environment optimized to promote and accelerate protein folding. The sequence is that of Chaperonin GroEL from Helicobacter pylori (strain J99 / ATCC 700824) (Campylobacter pylori J99).